Consider the following 455-residue polypeptide: Oxysterols receptor LXR-beta (455 aa).

Residues 1-10 are compositionally biased toward polar residues; it reads MSTPTTNSVD. Residues 1–53 are disordered; it reads MSTPTTNSVDTPLPGNGPSTPSSSPGGKEDGPEPCPGGADPDVPSTDGADSAS. The transactivation AF-1; required for ligand-independent transactivation function stretch occupies residues 1 to 80; the sequence is MSTPTTNSVD…GPAPKMLGDE (80 aa). The segment covering 14–26 has biased composition (low complexity); it reads PGNGPSTPSSSPG. Positions 79–156 form a DNA-binding region, nuclear receptor; that stretch reads DELCQVCGDT…AGMREQCVLS (78 aa). 2 consecutive NR C4-type zinc fingers follow at residues 82-102 and 120-144; these read CQVC…CEGC and CRGG…LRKC. Positions 164-210 are disordered; the sequence is KIRKQQQQQQQQSSPTGPGVSSSSPASGPGASPGGSDGGGQGSGEGE. A compositionally biased stretch (low complexity) spans 168–193; sequence QQQQQQQQSSPTGPGVSSSSPASGPG. Residues 194–210 show a composition bias toward gly residues; the sequence is ASPGGSDGGGQGSGEGE. Residues 214–455 form a transactivation AF-2; required for ligand-dependent transactivation function; mediates interaction with CCAR2 region; sequence LTAAQELMIQ…LLSEIWDVHE (242 aa). Positions 217–455 constitute an NR LBD domain; that stretch reads AQELMIQQLV…LLSEIWDVHE (239 aa). Residues Lys404 and Lys442 each participate in a glycyl lysine isopeptide (Lys-Gly) (interchain with G-Cter in SUMO2) cross-link.

The protein belongs to the nuclear hormone receptor family. NR1 subfamily. In terms of assembly, forms a heterodimer with RXR. Interacts with CCAR2 (via N-terminus) in a ligand-independent manner. Interacts (when sumoylated) with GPS2; interaction with GPS2 onto hepatic acute phase protein promoters prevents N-Cor corepressor complex dissociation. Interacts with ABCA12 and ABCA1; this interaction is required for ABCA1 localization to the cell surface and is necessary for its normal activity and stability. Post-translationally, sumoylated by SUMO2 at Lys-404 and Lys-442 during the hepatic acute phase response, leading to promote interaction with GPS2 and prevent N-Cor corepressor complex dissociation.

The protein resides in the nucleus. Nuclear receptor that exhibits a ligand-dependent transcriptional activation activity. Binds preferentially to double-stranded oligonucleotide direct repeats having the consensus half-site sequence 5'-AGGTCA-3' and 4-nt spacing (DR-4). Regulates cholesterol uptake through MYLIP-dependent ubiquitination of LDLR, VLDLR and LRP8; DLDLR and LRP8. Interplays functionally with RORA for the regulation of genes involved in liver metabolism. Induces LPCAT3-dependent phospholipid remodeling in endoplasmic reticulum (ER) membranes of hepatocytes, driving SREBF1 processing and lipogenesis. Via LPCAT3, triggers the incorporation of arachidonate into phosphatidylcholines of ER membranes, increasing membrane dynamics and enabling triacylglycerols transfer to nascent very low-density lipoprotein (VLDL) particles. Via LPCAT3 also counteracts lipid-induced ER stress response and inflammation, likely by modulating SRC kinase membrane compartmentalization and limiting the synthesis of lipid inflammatory mediators. Plays an anti-inflammatory role during the hepatic acute phase response by acting as a corepressor: inhibits the hepatic acute phase response by preventing dissociation of the N-Cor corepressor complex. This is Oxysterols receptor LXR-beta (NR1H2) from Bos taurus (Bovine).